We begin with the raw amino-acid sequence, 316 residues long: Porphobilinogen deaminase (316 aa).

At cysteine 245 the chain carries S-(dipyrrolylmethanemethyl)cysteine.

It belongs to the HMBS family. As to quaternary structure, monomer. Dipyrromethane is required as a cofactor.

It carries out the reaction 4 porphobilinogen + H2O = hydroxymethylbilane + 4 NH4(+). The protein operates within porphyrin-containing compound metabolism; protoporphyrin-IX biosynthesis; coproporphyrinogen-III from 5-aminolevulinate: step 2/4. Its pathway is porphyrin-containing compound metabolism; chlorophyll biosynthesis. Its function is as follows. Tetrapolymerization of the monopyrrole PBG into the hydroxymethylbilane pre-uroporphyrinogen in several discrete steps. In Prochlorococcus marinus (strain MIT 9515), this protein is Porphobilinogen deaminase.